The sequence spans 96 residues: UPF0251 protein Ssed_3913 (96 aa).

This sequence belongs to the UPF0251 family.

The protein is UPF0251 protein Ssed_3913 of Shewanella sediminis (strain HAW-EB3).